Consider the following 502-residue polypeptide: Probable glycerol kinase (502 aa).

Residue Thr-11 coordinates substrate. Residue Arg-15 coordinates ATP. Residues Arg-85, Tyr-140, and Asp-246 each coordinate substrate. ATP-binding positions include Thr-268, Gly-313, and 416 to 420; that span reads GMIAN.

Belongs to the FGGY kinase family.

The enzyme catalyses glycerol + ATP = sn-glycerol 3-phosphate + ADP + H(+). The protein operates within polyol metabolism; glycerol degradation via glycerol kinase pathway; sn-glycerol 3-phosphate from glycerol: step 1/1. The sequence is that of Probable glycerol kinase from Caenorhabditis elegans.